The following is a 168-amino-acid chain: NADH-quinone oxidoreductase subunit I (168 aa).

4Fe-4S ferredoxin-type domains lie at 58–88 (LRTY…IEAQ) and 99–128 (VRYD…EGPN). [4Fe-4S] cluster is bound by residues C68, C71, C74, C78, C108, C111, C114, and C118.

Belongs to the complex I 23 kDa subunit family. NDH-1 is composed of 14 different subunits. Subunits NuoA, H, J, K, L, M, N constitute the membrane sector of the complex. The cofactor is [4Fe-4S] cluster.

It localises to the cell inner membrane. The catalysed reaction is a quinone + NADH + 5 H(+)(in) = a quinol + NAD(+) + 4 H(+)(out). Functionally, NDH-1 shuttles electrons from NADH, via FMN and iron-sulfur (Fe-S) centers, to quinones in the respiratory chain. The immediate electron acceptor for the enzyme in this species is believed to be ubiquinone. Couples the redox reaction to proton translocation (for every two electrons transferred, four hydrogen ions are translocated across the cytoplasmic membrane), and thus conserves the redox energy in a proton gradient. The chain is NADH-quinone oxidoreductase subunit I from Ehrlichia ruminantium (strain Gardel).